Reading from the N-terminus, the 467-residue chain is MFKSVVYSILAASLANAGTIPLGKLADVDKIGTQKDIFPFLGGAGPYYSFPGDYGISRDLPEGCEMKQLQMVGRHGERYPTVSLAKTIKSTWYKLSNYTRQFNGSLSFLNDDYEFFIRDDDDLEMETTFANSDDVLNPYTGEMNAKRHARDFLAQYGYMVENQTSFAVFTSNSKRCHDTAQYFIDGLGDQFNITLQTVSEAESAGANTLSACNSCPAWDYDANDDIVNEYDTTYLDDIAKRLNKENKGLNLTSTDASTLFSWCAFEVNAKGYSDVCDIFTKDELVHYSYYQDLHTYYHEGPGYDIIKSVGSNLFNASVKLLKQSEIQDQKVWLSFTHDTDILNFLTTAGIIDDKNNLTAEYVPFMGNTFHRSWYVPQGARVYTEKFQCSNDTYVRYVINDAVVPIETCSTGPGFSCEINDFYDYAEKRVAGTDFLKVCNVSSVSNSTELTFYWDWNTTHYNASLLRQ.

The N-terminal stretch at 1-17 (MFKSVVYSILAASLANA) is a signal peptide. Catalysis depends on H75, which acts as the Nucleophile. N97, N103, N162, N192, N250, and N315 each carry an N-linked (GlcNAc...) asparagine glycan. D338 acts as the Proton donor in catalysis. Residues N356, N390, N439, N445, N456, and N461 are each glycosylated (N-linked (GlcNAc...) asparagine).

This sequence belongs to the histidine acid phosphatase family. Post-translationally, glycosylated during secretion across the membrane.

The protein resides in the secreted. It catalyses the reaction a phosphate monoester + H2O = an alcohol + phosphate. In terms of biological role, partially mediates extracellular nucleotide derived phosphate hydrolysis along with NPP1 and NPP2. In Saccharomyces cerevisiae (strain ATCC 204508 / S288c) (Baker's yeast), this protein is Repressible acid phosphatase (PHO5).